Reading from the N-terminus, the 100-residue chain is MSKLFESRLADVIRKPVITEKATNALDLNQYTFEVDHRAAKPQIKAAIEALFNVKVIGINTMNPPRRTRRVGKFSGKRSQVKKAIVRLAEGDKIQLFPES.

It belongs to the universal ribosomal protein uL23 family. Part of the 50S ribosomal subunit. Contacts protein L29, and trigger factor when it is bound to the ribosome.

In terms of biological role, one of the early assembly proteins it binds 23S rRNA. One of the proteins that surrounds the polypeptide exit tunnel on the outside of the ribosome. Forms the main docking site for trigger factor binding to the ribosome. The chain is Large ribosomal subunit protein uL23 from Prochlorococcus marinus (strain MIT 9515).